The chain runs to 421 residues: ATP-dependent RNA helicase RhlB (421 aa).

The short motif at 9–37 (QKFSDFALHPKVIEALENKGFHNCTPIQA) is the Q motif element. Residues 40 to 219 (LPLTLAGRDV…FEQMNNAEYV (180 aa)) form the Helicase ATP-binding domain. 53–60 (AQTGTGKT) is an ATP binding site. Residues 165-168 (DEAD) carry the DEAD box motif. Positions 245–390 (RLLQTLIEEE…VSKYNPEALM (146 aa)) constitute a Helicase C-terminal domain. The tract at residues 393–421 (LPKPLRLTRSRPGNGPRRTGAPRNRRRSG) is disordered. Positions 403 to 414 (RPGNGPRRTGAP) are enriched in low complexity.

This sequence belongs to the DEAD box helicase family. RhlB subfamily. Component of the RNA degradosome, which is a multiprotein complex involved in RNA processing and mRNA degradation.

It localises to the cytoplasm. The catalysed reaction is ATP + H2O = ADP + phosphate + H(+). Functionally, DEAD-box RNA helicase involved in RNA degradation. Has RNA-dependent ATPase activity and unwinds double-stranded RNA. The chain is ATP-dependent RNA helicase RhlB from Citrobacter koseri (strain ATCC BAA-895 / CDC 4225-83 / SGSC4696).